We begin with the raw amino-acid sequence, 544 residues long: Chaperonin GroEL 2 (544 aa).

Residues 29 to 32 (TLGP), 86 to 90 (DGTTT), Gly413, 479 to 481 (NAA), and Asp495 contribute to the ATP site.

This sequence belongs to the chaperonin (HSP60) family. In terms of assembly, forms a cylinder of 14 subunits composed of two heptameric rings stacked back-to-back. Interacts with the co-chaperonin GroES.

It localises to the cytoplasm. It carries out the reaction ATP + H2O + a folded polypeptide = ADP + phosphate + an unfolded polypeptide.. Together with its co-chaperonin GroES, plays an essential role in assisting protein folding. The GroEL-GroES system forms a nano-cage that allows encapsulation of the non-native substrate proteins and provides a physical environment optimized to promote and accelerate protein folding. The polypeptide is Chaperonin GroEL 2 (Prochlorococcus marinus (strain MIT 9515)).